Reading from the N-terminus, the 89-residue chain is cAMP-regulated phosphoprotein 21 (89 aa).

Residues 1–89 (MSEQGDLNQA…GGESLQDQTL (89 aa)) form a disordered region. The residue at position 2 (Ser2) is an N-acetylserine. Residues 9 to 25 (QAIAEEGGTEQETATPE) show a composition bias toward low complexity. Ser33 carries the phosphoserine modification. A compositionally biased stretch (basic and acidic residues) spans 40–53 (LELQRRLEAQNQER). Residue Ser56 is modified to Phosphoserine.

Interacts with CALM1. Post-translationally, phosphorylation at Ser-56 favors interaction with CALM1.

The protein resides in the cytoplasm. Functionally, may act as a competitive inhibitor of calmodulin-dependent enzymes such as calcineurin in neurons. This is cAMP-regulated phosphoprotein 21 (ARPP21) from Pongo abelii (Sumatran orangutan).